Reading from the N-terminus, the 490-residue chain is GTPase Der (490 aa).

2 EngA-type G domains span residues 1 to 165 (MRIA…QIPV) and 227 to 400 (LKVA…TIAT). GTP-binding positions include 7–14 (GRPNVGKS), 54–58 (DTGGV), 117–120 (NKAD), 233–240 (GHPNVGKS), 280–284 (DTAGL), and 345–348 (NKWD). Residues 401–485 (TKLSTSLVNK…PFDLEYKAKP (85 aa)) enclose the KH-like domain.

Belongs to the TRAFAC class TrmE-Era-EngA-EngB-Septin-like GTPase superfamily. EngA (Der) GTPase family. In terms of assembly, associates with the 50S ribosomal subunit.

GTPase that plays an essential role in the late steps of ribosome biogenesis. The chain is GTPase Der from Chlamydia trachomatis serovar A (strain ATCC VR-571B / DSM 19440 / HAR-13).